A 337-amino-acid chain; its full sequence is Protein RecA (337 aa).

66–73 (GPESSGKT) provides a ligand contact to ATP.

It belongs to the RecA family.

It is found in the cytoplasm. Functionally, can catalyze the hydrolysis of ATP in the presence of single-stranded DNA, the ATP-dependent uptake of single-stranded DNA by duplex DNA, and the ATP-dependent hybridization of homologous single-stranded DNAs. It interacts with LexA causing its activation and leading to its autocatalytic cleavage. This Mesomycoplasma hyopneumoniae (strain 232) (Mycoplasma hyopneumoniae) protein is Protein RecA.